A 60-amino-acid chain; its full sequence is Light-harvesting polypeptide B-885 alpha-2 chain (60 aa).

Residues 1–16 (SAPAQWKLWLVMDPRT) lie on the Cytoplasmic side of the membrane. Residues 17 to 37 (VMIGTAAWLGVLALLIHFLLL) form a helical membrane-spanning segment. A bacteriochlorophyll is bound at residue His-33. The Periplasmic segment spans residues 38 to 60 (GTERFNWIDTGLKEQKATAAAQA).

This sequence belongs to the antenna complex alpha subunit family. The core complex is formed by different alpha and beta chains, binding bacteriochlorophyll molecules, and arranged most probably in tetrameric structures disposed around the reaction center. The non-pigmented gamma chains may constitute additional components.

It is found in the cell inner membrane. In terms of biological role, antenna complexes are light-harvesting systems, which transfer the excitation energy to the reaction centers. This is Light-harvesting polypeptide B-885 alpha-2 chain from Rhodocyclus tenuis (Rhodospirillum tenue).